Reading from the N-terminus, the 261-residue chain is Probable membrane transporter protein XF_0764 (261 aa).

The next 8 membrane-spanning stretches (helical) occupy residues 6–26, 29–49, 78–98, 99–119, 150–170, 175–195, 205–225, and 239–259; these read LIVT…LGGG, ILAT…IAIG, VIFA…GMLI, DGQR…LLML, AASG…LIFA, TINA…ITTL, WTIA…GTLL, and VFGL…WASL.

It belongs to the 4-toluene sulfonate uptake permease (TSUP) (TC 2.A.102) family.

It is found in the cell membrane. This is Probable membrane transporter protein XF_0764 from Xylella fastidiosa (strain 9a5c).